We begin with the raw amino-acid sequence, 327 residues long: GPI-linked NAD(P)(+)--arginine ADP-ribosyltransferase 1 (327 aa).

Positions 1–22 are cleaved as a signal peptide; the sequence is MWVPAVANLLLLSLGLLEAIQA. 2 disulfides stabilise this stretch: Cys53/Cys277 and Cys174/Cys224. Asn65 carries an N-linked (GlcNAc...) asparagine glycan. Positions 73-273 constitute a TR mART core domain; that stretch reads KVYADGWALA…IYLKALGKRS (201 aa). The NAD(+) site is built by Tyr121 and Arg179. Catalysis depends on residues Arg179 and Ser202. Ser233 contacts NAD(+). Glu240 is an active-site residue. N-linked (GlcNAc...) asparagine glycosylation is present at Asn253. Ser295 is lipidated: GPI-anchor amidated serine. The propeptide at 296-327 is removed in mature form; the sequence is ASAQERLSTAWSLLLLLAFLAVGPFPGSPGLF.

Belongs to the Arg-specific ADP-ribosyltransferase family. In terms of tissue distribution, primarily in skeletal and cardiac muscle.

The protein localises to the sarcoplasmic reticulum membrane. It carries out the reaction L-arginyl-[protein] + NAD(+) = N(omega)-(ADP-D-ribosyl)-L-arginyl-[protein] + nicotinamide + H(+). In terms of biological role, has ADP-ribosyltransferase activity toward GLP1R. This chain is GPI-linked NAD(P)(+)--arginine ADP-ribosyltransferase 1 (ART1), found in Oryctolagus cuniculus (Rabbit).